We begin with the raw amino-acid sequence, 948 residues long: MASSIRRGLGAWTRLLSLLLLAAWEVGSGQLRYSVPEEAKHGTFVGRIAQDLGLELAELVPRLFRVASKRHGDLLEVNLQNGILFVNSRIDREELCGRSAECSIHLEVIVDRPLQVFHVEVEVKDINDNPPVFPMTVKTIRFPESRLLDSRFPLEGASDADIGVNALLSYKLSSSEFFFLDIQTNDELSESLSLVLGKSLDREETAEVNLLLVATDGGKPELTGTVQILIKVLDVNDNEPTFAQSVYKVKLLENTANGTLVVKLNASDADEGSNSEIVYSLGSDVSSTIQTKFTIDPISGEIRTKGKLDYEEAKSYEIQVTATDKGTPSMSGHCKISLKLVDINDNTPEVSITSLSLPISENASLGTVIALITVSDRDSGTNGHVTCSLTPHVPFKLVSTFKNYYSLVLDSALDRESVSAYELVVTARDGGSPSLWATTSVSIEVADVNDNAPAFAQPEYTVFVKENNPPGCHIFTVSAWDADAQENALVSYSLVERRVGERALSSYVSVHAESGKVYALQPLDHEEVELLQFQVTARDAGVPPLGSNVTLQVFVLDENDNAPALLAPRAGTAAGAVSELVPWSVGAGHVVAKVRAVDADSGYNAWLSYELQLGTGSARIPFRVGLYTGEISTTRALDEADSPRHRLLVLVKDHGEPALTATATVLVSLVESGQAPKASSRAWVGAAGSEATLVDVNVYLIIAICAVSSLLVLTVLLYTALRCSVPATEGARAPGKPTLVCSSAVGSWSYSQQRRQRVCSGEDPPKTDLMAFSPSLSQGPDSAEEKQLSESEYVGKPRQPNPDWRYSASLRAGMHSSVHLEEAGILRAGPGGPDQQWPTVSSATPEPEAGEVSPPVGAGVNSNSWTFKYGPGNPKQSGPGELPDKFIIPGSPAIISIRQEPANSQIDKSDFITFGKKEETKKKKKKKKGNKTQEKKEKGNSTTDNSDQ.

Positions 1–22 (MASSIRRGLGAWTRLLSLLLLA) are cleaved as a signal peptide. The Extracellular segment spans residues 23-697 (AWEVGSGQLR…GSEATLVDVN (675 aa)). 6 Cadherin domains span residues 30 to 133 (QLRY…PPVF), 157 to 242 (ASDA…EPTF), 243 to 350 (AQSV…TPEV), 351 to 455 (SITS…APAF), 456 to 565 (AQPE…APAL), and 588 to 678 (GHVV…APKA). N-linked (GlcNAc...) asparagine glycosylation is found at N257, N265, N362, and N548. Residues 698 to 718 (VYLIIAICAVSSLLVLTVLLY) form a helical membrane-spanning segment. Over 719–948 (TALRCSVPAT…GNSTTDNSDQ (230 aa)) the chain is Cytoplasmic. Residues 734–737 (PGKP) form a PXXP 1 repeat. Residues 734–892 (PGKPTLVCSS…PDKFIIPGSP (159 aa)) are 5 X 4 AA repeats of P-X-X-P. 3 disordered regions span residues 755 to 801 (RQRV…RQPN), 829 to 854 (GPGGPDQQWPTVSSATPEPEAGEVSP), and 868 to 948 (KYGP…NSDQ). Basic and acidic residues predominate over residues 783 to 795 (AEEKQLSESEYVG). PXXP repeat units lie at residues 797-800 (PRQP), 830-833 (PGGP), 871-874 (PGNP), and 889-892 (PGSP). The span at 907–921 (DKSDFITFGKKEETK) shows a compositional bias: basic and acidic residues.

The protein resides in the cell membrane. Potential calcium-dependent cell-adhesion protein. May be involved in the establishment and maintenance of specific neuronal connections in the brain. This is Protocadherin alpha-2 (PCDHA2) from Pan troglodytes (Chimpanzee).